Reading from the N-terminus, the 247-residue chain is 2,3-bisphosphoglycerate-dependent phosphoglycerate mutase (247 aa).

Substrate-binding positions include R8 to N15, T21 to G22, R60, E87 to Y90, K98, R114 to R115, and G183 to N184. H9 functions as the Tele-phosphohistidine intermediate in the catalytic mechanism. E87 (proton donor/acceptor) is an active-site residue.

This sequence belongs to the phosphoglycerate mutase family. BPG-dependent PGAM subfamily. Homodimer.

The enzyme catalyses (2R)-2-phosphoglycerate = (2R)-3-phosphoglycerate. Its pathway is carbohydrate degradation; glycolysis; pyruvate from D-glyceraldehyde 3-phosphate: step 3/5. Its function is as follows. Catalyzes the interconversion of 2-phosphoglycerate and 3-phosphoglycerate. The chain is 2,3-bisphosphoglycerate-dependent phosphoglycerate mutase from Albidiferax ferrireducens (strain ATCC BAA-621 / DSM 15236 / T118) (Rhodoferax ferrireducens).